The sequence spans 1214 residues: Genome polyprotein (1214 aa).

The SF3 helicase domain occupies 1–55 (NKGKTFTSKYVIMTSNTETPVKPTSRRAGAFYRRVMIVDVTNNAVEKWKSDNPGK). Y428 is subject to O-(5'-phospho-RNA)-tyrosine. A Peptidase C24 domain is found at 523-676 (GVAHKNAIVS…KLIVPYAKVD (154 aa)). Residues H557, E578, and C640 each act as for 3CLpro activity in the active site. In terms of domain architecture, RdRp catalytic spans 926 to 1051 (HDRYCVDYSK…IVPPLISSVM (126 aa)).

Post-translationally, specific enzymatic cleavages in vivo yield mature proteins. Pro-Pol is first autocatalytically cleaved, then processes the whole polyprotein. In terms of processing, VPg is uridylylated by the polymerase and is covalently attached to the 5'-end of the polyadenylated genomic and subgenomic RNAs. This uridylylated form acts as a nucleotide-peptide primer for the polymerase.

It carries out the reaction a ribonucleoside 5'-triphosphate + H2O = a ribonucleoside 5'-diphosphate + phosphate + H(+). It catalyses the reaction RNA(n) + a ribonucleoside 5'-triphosphate = RNA(n+1) + diphosphate. The catalysed reaction is Endopeptidase with a preference for cleavage when the P1 position is occupied by Glu-|-Xaa and the P1' position is occupied by Gly-|-Yaa.. NTPase presumably plays a role in replication. Despite having similarities with helicases, does not seem to display any helicase activity. Functionally, viral genome-linked protein is covalently linked to the 5'-end of the positive-strand, negative-strand genomic RNAs and subgenomic RNA. Acts as a genome-linked replication primer. May recruit ribosome to viral RNA thereby promoting viral proteins translation. Its function is as follows. Protease-polymerase p76 processes the polyprotein: Pro-Pol is first released by autocleavage, then all other proteins are cleaved. Cleaves host translation initiation factor eIF4G1 and eIF4G2 thereby inducing a shutdown of host protein synthesis. This shutdown may not prevent viral mRNA from being translated since viral Vpg replaces the cap. May cleave host polyadenylate-binding protein thereby inhibiting cellular translation. It is also an RNA-directed RNA polymerase which replicates genomic and antigenomic viral RNA by recognizing specific signals. Also transcribes a subgenomic mRNA by initiating RNA synthesis internally on antigenomic RNA. This sgRNA codes for structural proteins. Catalyzes the covalent attachment VPg with viral RNAs. In San Miguel sea lion virus serotype 4 (SMSV-4), this protein is Genome polyprotein.